A 406-amino-acid chain; its full sequence is Dematin (406 aa).

Disordered stretches follow at residues Met-1–Ile-30 and Leu-78–Asn-333. Residues Ser-11 to Ser-29 show a composition bias toward low complexity. 10 positions are modified to phosphoserine: Ser-16, Ser-18, Ser-26, Ser-92, Ser-96, Ser-105, Ser-110, Ser-113, Ser-157, and Ser-227. Residues Ser-105–Ala-114 show a composition bias toward polar residues. Positions Glu-217–Gly-228 are enriched in acidic residues. An interaction with RASGRF2 region spans residues Asp-225 to Pro-309. 2 stretches are compositionally biased toward basic and acidic residues: residues Glu-229–Ser-243 and Ile-253–Leu-262. Residues Ser-270, Ser-280, Ser-290, Ser-304, Ser-316, Ser-334, Ser-373, and Ser-384 each carry the phosphoserine modification. Over residues His-282–Glu-323 the composition is skewed to polar residues. Residues Val-338–Phe-406 form the HP domain. Phosphoserine; by PKA is present on Ser-404.

The protein belongs to the villin/gelsolin family. In terms of assembly, monomeric; under reducing conditions. Self-associates. Exists under oxidizing condition as a trimer linked by disulfide bonds. Found in a complex with DMTN, F-actin and spectrin. Found in a complex with ADD2, DMTN and SLC2A1. Interacts with F-actin, ITPKB and spectrin. Interacts with SLC2A1 (via C-terminus cytoplasmic region). Interacts with RASGRF2. Post-translationally, phosphorylated. Phosphorylation at Ser-404 by PKA causes the C-terminal headpiece domain to associate with the N-terminal core domain, and leads to the inhibition of its actin bundling activity.

It localises to the cytoplasm. The protein resides in the cytosol. The protein localises to the perinuclear region. Its subcellular location is the cytoskeleton. It is found in the cell membrane. It localises to the membrane. The protein resides in the endomembrane system. The protein localises to the cell projection. Its function is as follows. Membrane-cytoskeleton-associated protein with F-actin-binding activity that induces F-actin bundles formation and stabilization. Its F-actin-bundling activity is reversibly regulated upon its phosphorylation by the cAMP-dependent protein kinase A (PKA). Binds to the erythrocyte membrane glucose transporter-1 SLC2A1/GLUT1, and hence stabilizes and attaches the spectrin-actin network to the erythrocytic plasma membrane. Plays a role in maintaining the functional integrity of PKA-activated erythrocyte shape and the membrane mechanical properties. Also plays a role as a modulator of actin dynamics in fibroblasts; acts as a negative regulator of the RhoA activation pathway. In platelets, functions as a regulator of internal calcium mobilization across the dense tubular system that affects platelet granule secretion pathways and aggregation. Also required for the formation of a diverse set of cell protrusions, such as filopodia and lamellipodia, necessary for platelet cell spreading, motility and migration. Acts as a tumor suppressor and inhibits malignant cell transformation. This is Dematin (DMTN) from Bos taurus (Bovine).